Here is a 323-residue protein sequence, read N- to C-terminus: HPr kinase/phosphorylase (323 aa).

Residues H146 and K167 contribute to the active site. Position 161–168 (161–168) interacts with ATP; it reads GESGLGKS. Residue S168 coordinates Mg(2+). The active-site Proton acceptor; for phosphorylation activity. Proton donor; for dephosphorylation activity is D185. Residues 209–218 form an important for the catalytic mechanism of both phosphorylation and dephosphorylation region; it reads LEVRGLGLLD. Residue E210 participates in Mg(2+) binding. Residue R250 is part of the active site. The tract at residues 271-276 is important for the catalytic mechanism of dephosphorylation; sequence QVAAGR.

Belongs to the HPrK/P family. In terms of assembly, homohexamer. The cofactor is Mg(2+).

The enzyme catalyses [HPr protein]-L-serine + ATP = [HPr protein]-O-phospho-L-serine + ADP + H(+). It carries out the reaction [HPr protein]-O-phospho-L-serine + phosphate + H(+) = [HPr protein]-L-serine + diphosphate. Catalyzes the ATP- as well as the pyrophosphate-dependent phosphorylation of a specific serine residue in HPr, a phosphocarrier protein of the phosphoenolpyruvate-dependent sugar phosphotransferase system (PTS). HprK/P also catalyzes the pyrophosphate-producing, inorganic phosphate-dependent dephosphorylation (phosphorolysis) of seryl-phosphorylated HPr (P-Ser-HPr). The chain is HPr kinase/phosphorylase from Cupriavidus necator (strain ATCC 17699 / DSM 428 / KCTC 22496 / NCIMB 10442 / H16 / Stanier 337) (Ralstonia eutropha).